The following is a 516-amino-acid chain: GMP synthase [glutamine-hydrolyzing] (516 aa).

The Glutamine amidotransferase type-1 domain maps to K8–L198. The active-site Nucleophile is C84. Catalysis depends on residues H172 and E174. The 193-residue stretch at W199 to R391 folds into the GMPS ATP-PPase domain. S226–S232 serves as a coordination point for ATP.

As to quaternary structure, homodimer.

The enzyme catalyses XMP + L-glutamine + ATP + H2O = GMP + L-glutamate + AMP + diphosphate + 2 H(+). The protein operates within purine metabolism; GMP biosynthesis; GMP from XMP (L-Gln route): step 1/1. Its function is as follows. Catalyzes the synthesis of GMP from XMP. The sequence is that of GMP synthase [glutamine-hydrolyzing] from Francisella tularensis subsp. mediasiatica (strain FSC147).